The primary structure comprises 890 residues: Major vault protein (890 aa).

MVP repeat units lie at residues 2–56 (SMEE…VPPR), 57–111 (HYCM…DITP), 112–164 (LQVV…EIIQ), 165–217 (ATVI…DVVD), 218–272 (AVIL…GVVS), 273–323 (VTTL…IQNV), 324–379 (YVLS…ERQA), 380–457 (IPLD…KTRV), and 458–520 (VSYR…LLGP). The tract at residues 425 to 455 (ELLNKGQDPLADRGEKETSKTPKLSTPRNKT) is disordered. Positions 434 to 444 (LADRGEKETSK) are enriched in basic and acidic residues. A Glycyl lysine isopeptide (Lys-Gly) (interchain with G-Cter in SUMO2) cross-link involves residue Lys444.

The vault ribonucleoprotein particle is a huge (400 A x 670 A) cage structure of 12.9 MDa. It consists of a dimer of half-vaults, with each half-vault comprising 39 identical major vault protein (MVP) chains, PARP4 and one or more vault RNAs (vRNAs). Interacts with TEP1. Interacts with PTEN and activated MAPK1. The phosphorylated protein interacts with the SH2 domains of PTPN11 and SRC. Interacts with APEX1. May interact with ZNF540. Phosphorylated on Tyr residues after EGF stimulation. In terms of processing, dephosphorylated by PTPN11.

It is found in the cytoplasm. The protein resides in the nucleus. Its function is as follows. Required for normal vault structure. Vaults are multi-subunit structures that may act as scaffolds for proteins involved in signal transduction. Vaults may also play a role in nucleo-cytoplasmic transport. Down-regulates IFNG-mediated STAT1 signaling and subsequent activation of JAK. Down-regulates SRC activity and signaling through MAP kinases. The protein is Major vault protein (MVP) of Bos taurus (Bovine).